A 537-amino-acid chain; its full sequence is Phosphoenolpyruvate carboxykinase (ATP) (537 aa).

R61, Y195, and K201 together coordinate substrate. ATP contacts are provided by residues K201, H220, and 236–244 (GLSGTGKTT). Mn(2+)-binding residues include K201 and H220. Position 257 (D257) interacts with Mn(2+). 3 residues coordinate ATP: E285, R323, and T448. Substrate is bound at residue R323.

It belongs to the phosphoenolpyruvate carboxykinase (ATP) family. The cofactor is Mn(2+).

The protein localises to the cytoplasm. It carries out the reaction oxaloacetate + ATP = phosphoenolpyruvate + ADP + CO2. The protein operates within carbohydrate biosynthesis; gluconeogenesis. In terms of biological role, involved in the gluconeogenesis. Catalyzes the conversion of oxaloacetate (OAA) to phosphoenolpyruvate (PEP) through direct phosphoryl transfer between the nucleoside triphosphate and OAA. This is Phosphoenolpyruvate carboxykinase (ATP) from Rhodopseudomonas palustris (strain ATCC BAA-98 / CGA009).